The following is a 208-amino-acid chain: uncharacterized protein (208 aa).

A signal peptide spans 1 to 34 (MPSHCRERLPFALHFFAVAYGASLWILGSHGLAA).

This is an uncharacterized protein from Sinorhizobium fredii (strain NBRC 101917 / NGR234).